Consider the following 122-residue polypeptide: Small ribosomal subunit protein uS13 (122 aa).

The segment at 97–122 (PVRGQRTKTNARTRKGPARTVAGKKK) is disordered.

This sequence belongs to the universal ribosomal protein uS13 family. As to quaternary structure, part of the 30S ribosomal subunit. Forms a loose heterodimer with protein S19. Forms two bridges to the 50S subunit in the 70S ribosome.

In terms of biological role, located at the top of the head of the 30S subunit, it contacts several helices of the 16S rRNA. In the 70S ribosome it contacts the 23S rRNA (bridge B1a) and protein L5 of the 50S subunit (bridge B1b), connecting the 2 subunits; these bridges are implicated in subunit movement. Contacts the tRNAs in the A and P-sites. This Pelobacter propionicus (strain DSM 2379 / NBRC 103807 / OttBd1) protein is Small ribosomal subunit protein uS13.